Consider the following 74-residue polypeptide: Large ribosomal subunit protein bL31 (74 aa).

It belongs to the bacterial ribosomal protein bL31 family. Type A subfamily. Part of the 50S ribosomal subunit.

Functionally, binds the 23S rRNA. The sequence is that of Large ribosomal subunit protein bL31 from Afipia carboxidovorans (strain ATCC 49405 / DSM 1227 / KCTC 32145 / OM5) (Oligotropha carboxidovorans).